A 469-amino-acid polypeptide reads, in one-letter code: IAA-alanine resistance protein 1 (469 aa).

The N-terminal stretch at 1–28 is a signal peptide; sequence MSFSLRKLLVPILVLVLFLDLCVESGFS. The disordered stretch occupies residues 33–58; sequence ARDDHVHHHGGGCSHSHDHDHDHDHD. Residues 47–58 show a composition bias toward basic and acidic residues; that stretch reads HSHDHDHDHDHD. 2 helical membrane-spanning segments follow: residues 114–134 and 141–161; these read CSLLVSLASLICLVLLPIMFV and WFVDSLALFGAGAMLGDAFLH. The interval 170–197 is disordered; it reads GHSHSNDHHENHDHHDHSHSDSPSHSHS. The span at 173–193 shows a compositional bias: basic and acidic residues; that stretch reads HSNDHHENHDHHDHSHSDSPS. Residues 201 to 221 traverse the membrane as a helical segment; sequence LSVGLSVLAGIVVFLLVEKLV. The disordered stretch occupies residues 228–315; sequence SSGSNTWGHH…GKSDKPEQVE (88 aa). Basic residues predominate over residues 235–246; that stretch reads GHHHHHHHAGSK. Residues 247–256 show a composition bias toward basic and acidic residues; the sequence is KLKDEGDHNN. The segment covering 257-279 has biased composition (polar residues); the sequence is LDQQSSSDAIVNSSEKVSGGSTD. Basic and acidic residues predominate over residues 292-315; sequence ATDKSDSGTEITSDGKSDKPEQVE. Helical transmembrane passes span 387 to 407, 415 to 435, and 448 to 468; these read LFFNFLSALVALAGTALVLVW, SLIEGFTAGGFIYIAVAGVLA, and SACHLISLILGMSVALCISLI.

It belongs to the ZIP transporter (TC 2.A.5) family. KE4/Catsup subfamily.

Its subcellular location is the membrane. Functionally, may participate in auxin metabolism or response. Probable transporter. This is IAA-alanine resistance protein 1 (IAR1) from Arabidopsis thaliana (Mouse-ear cress).